The chain runs to 109 residues: U4-lycotoxin-Ls1a (109 aa).

Residues 1 to 22 form the signal peptide; the sequence is MKVLVLFSVLFLTLFSYSSTEA. The propeptide occupies 23-44; it reads IDEFDSDAEEDMLSLMANEQVR. A knottin domain region spans residues 45 to 88; sequence AKACTPRLHDCSHDRHSCCRGELFKDVCYCFYPEGEDKTEVCSC. 4 cysteine pairs are disulfide-bonded: Cys-48-Cys-63, Cys-55-Cys-72, Cys-62-Cys-88, and Cys-74-Cys-86. The tract at residues 89 to 108 is linear cationic cytotoxin domain; the sequence is QQPKSHKYIEKVVDKAKTVV.

Belongs to the neurotoxin 19 (CSTX) family. 05 (U4-Lctx) subfamily. As to expression, expressed by the venom gland.

The protein localises to the secreted. Its function is as follows. Enhances the high-affinity desensitization of human P2RX3 purinoceptors. This is U4-lycotoxin-Ls1a from Lycosa singoriensis (Wolf spider).